The following is a 292-amino-acid chain: Inositol oxygenase (292 aa).

Substrate is bound by residues Arg-33 and 88-90 (DES). Residues His-101, His-128, and Asp-129 each contribute to the Fe cation site. Substrate is bound by residues Lys-132 and 149–150 (GD). 3 residues coordinate Fe cation: His-201, His-227, and Asp-260. 227–228 (HS) serves as a coordination point for substrate.

It belongs to the myo-inositol oxygenase family. The cofactor is Fe cation.

It is found in the cytoplasm. The enzyme catalyses myo-inositol + O2 = D-glucuronate + H2O + H(+). It functions in the pathway polyol metabolism; myo-inositol degradation into D-glucuronate; D-glucuronate from myo-inositol: step 1/1. In Dictyostelium discoideum (Social amoeba), this protein is Inositol oxygenase (miox).